A 560-amino-acid chain; its full sequence is Phenylalanine--tRNA ligase beta subunit (560 aa).

The B5 domain maps to 279–354 (LTPKEFEVDL…IAYGYNNIEP (76 aa)). Mg(2+)-binding residues include Asp-332, Asp-338, Glu-341, and Asp-342.

It belongs to the phenylalanyl-tRNA synthetase beta subunit family. Type 2 subfamily. As to quaternary structure, tetramer of two alpha and two beta subunits. Mg(2+) serves as cofactor.

The protein localises to the cytoplasm. It catalyses the reaction tRNA(Phe) + L-phenylalanine + ATP = L-phenylalanyl-tRNA(Phe) + AMP + diphosphate + H(+). The chain is Phenylalanine--tRNA ligase beta subunit from Thermococcus sibiricus (strain DSM 12597 / MM 739).